Here is an 883-residue protein sequence, read N- to C-terminus: Sodium/sulfate cotransporter 2 (883 aa).

6 helical membrane passes run 3 to 23, 30 to 50, 60 to 80, 106 to 126, 139 to 159, and 185 to 205; these read FGWQ…VMAA, VTFT…VTVA, GLLT…TGGL, MCLS…PILI, LLIP…IGTS, and IFDI…FILL. RCK C-terminal domains lie at 211-295, 317-401, 406-491, and 497-583; these read LPGN…EFGL, VFTP…SKNN, VRAV…FPGL, and EQVD…DKSF. 6 helical membrane-spanning segments follow: residues 600–620, 624–644, 657–677, 693–713, 774–794, and 802–822; these read MVIG…GGLK, YIHL…TGCM, VYLT…TGVA, SDGA…ELLT, FAII…FILC, and VWIV…LYFL. The tract at residues 857 to 883 is disordered; that stretch reads QASRTGSDGTGSSDSPRALGVPKVITA. The segment covering 861 to 871 has biased composition (low complexity); it reads TGSDGTGSSDS.

It belongs to the divalent anion:Na+ symporter (DASS) superfamily. Na+/sulfate symporter (TC 2.A.47.4) family.

It localises to the cell membrane. Functionally, na(+)/sulfate cotransporter with a probable high-affinity for sulfate and a proteasome dependent turnover. This chain is Sodium/sulfate cotransporter 2 (SLT2), found in Chlamydomonas reinhardtii (Chlamydomonas smithii).